Reading from the N-terminus, the 969-residue chain is Leucine--tRNA ligase (969 aa).

Positions 78 to 89 (PYPSGEGLHVGH) match the 'HIGH' region motif. A 'KMSKS' region motif is present at residues 739 to 743 (KIGKS). Lys-742 serves as a coordination point for ATP.

This sequence belongs to the class-I aminoacyl-tRNA synthetase family.

It localises to the cytoplasm. The catalysed reaction is tRNA(Leu) + L-leucine + ATP = L-leucyl-tRNA(Leu) + AMP + diphosphate. The protein is Leucine--tRNA ligase of Mycobacterium tuberculosis (strain ATCC 25177 / H37Ra).